The sequence spans 465 residues: UDP-N-acetylmuramate--L-alanine ligase (465 aa).

115 to 121 (GAHGKTT) serves as a coordination point for ATP.

Belongs to the MurCDEF family.

Its subcellular location is the cytoplasm. The catalysed reaction is UDP-N-acetyl-alpha-D-muramate + L-alanine + ATP = UDP-N-acetyl-alpha-D-muramoyl-L-alanine + ADP + phosphate + H(+). Its pathway is cell wall biogenesis; peptidoglycan biosynthesis. Functionally, cell wall formation. The sequence is that of UDP-N-acetylmuramate--L-alanine ligase from Coxiella burnetii (strain CbuG_Q212) (Coxiella burnetii (strain Q212)).